The chain runs to 286 residues: NAD kinase (286 aa).

Aspartate 67 serves as the catalytic Proton acceptor. Residues 67-68 (DG), arginine 72, 141-142 (ND), arginine 152, aspartate 171, 182-187 (TAYSLS), and glutamine 242 contribute to the NAD(+) site.

It belongs to the NAD kinase family. A divalent metal cation is required as a cofactor.

Its subcellular location is the cytoplasm. It catalyses the reaction NAD(+) + ATP = ADP + NADP(+) + H(+). Involved in the regulation of the intracellular balance of NAD and NADP, and is a key enzyme in the biosynthesis of NADP. Catalyzes specifically the phosphorylation on 2'-hydroxyl of the adenosine moiety of NAD to yield NADP. This chain is NAD kinase, found in Ruminiclostridium cellulolyticum (strain ATCC 35319 / DSM 5812 / JCM 6584 / H10) (Clostridium cellulolyticum).